The sequence spans 404 residues: Mevalonate kinase (404 aa).

Residues K12, S130, and 135–141 contribute to the ATP site; that span reads GAGLGSS. Positions 141 and 184 each coordinate Mg(2+). D195 serves as the catalytic Proton acceptor.

It belongs to the GHMP kinase family. Mevalonate kinase subfamily. In terms of assembly, homodimer. It depends on Mg(2+) as a cofactor.

The protein localises to the cytoplasm. The protein resides in the nucleus. It catalyses the reaction (R)-mevalonate + ATP = (R)-5-phosphomevalonate + ADP + H(+). Its pathway is isoprenoid biosynthesis; isopentenyl diphosphate biosynthesis via mevalonate pathway; isopentenyl diphosphate from (R)-mevalonate: step 1/3. Farnesyl pyrophosphate and geranyl pyrophosphate inhibit mevalonate kinase by binding competitively at the ATP-binding site. In terms of biological role, mevalonate kinase; part of the second module of ergosterol biosynthesis pathway that includes the middle steps of the pathway. Erg12 converts mevalonate into 5-phosphomevalonate. The second module is carried out in the vacuole and involves the formation of farnesyl diphosphate, which is also an important intermediate in the biosynthesis of ubiquinone, dolichol, heme and prenylated proteins. Activity by the mevalonate kinase erg12 first converts mevalonate into 5-phosphomevalonate. 5-phosphomevalonate is then further converted to 5-diphosphomevalonate by the phosphomevalonate kinase erg8. The diphosphomevalonate decarboxylase mvd1 then produces isopentenyl diphosphate. The isopentenyl-diphosphate delta-isomerase idi1 then catalyzes the 1,3-allylic rearrangement of the homoallylic substrate isopentenyl (IPP) to its highly electrophilic allylic isomer, dimethylallyl diphosphate (DMAPP). Finally the farnesyl diphosphate synthase fps1 catalyzes the sequential condensation of isopentenyl pyrophosphate with dimethylallyl pyrophosphate, and then with the resultant geranylpyrophosphate to the ultimate product farnesyl pyrophosphate. The chain is Mevalonate kinase (erg12) from Schizosaccharomyces pombe (strain 972 / ATCC 24843) (Fission yeast).